Here is a 232-residue protein sequence, read N- to C-terminus: 2,3-bisphosphoglycerate-dependent phosphoglycerate mutase 1 (232 aa).

Residues 8–15 (RHGQSLWN), 21–22 (TG), Arg58, 114–117 (ERYY), Lys125, 141–142 (RR), and 185–186 (GN) contribute to the substrate site. The active-site Tele-phosphohistidine intermediate is the His9. Glu114 (proton donor/acceptor) is an active-site residue.

The protein belongs to the phosphoglycerate mutase family. BPG-dependent PGAM subfamily.

It catalyses the reaction (2R)-2-phosphoglycerate = (2R)-3-phosphoglycerate. It functions in the pathway carbohydrate degradation; glycolysis; pyruvate from D-glyceraldehyde 3-phosphate: step 3/5. In terms of biological role, catalyzes the interconversion of 2-phosphoglycerate and 3-phosphoglycerate. This chain is 2,3-bisphosphoglycerate-dependent phosphoglycerate mutase 1, found in Gloeobacter violaceus (strain ATCC 29082 / PCC 7421).